A 782-amino-acid chain; its full sequence is Fibrinogen alpha chain (782 aa).

Residues 1–19 (MLSLRVACLILSLASTVWT) form the signal peptide. The stretch at 68 to 547 (GCRMKGLIDE…KRGRARTMRD (480 aa)) forms a coiled coil. Basic and acidic residues predominate over residues 264–283 (RPGKDGASRGDLPGDSRGDS). Positions 264–374 (RPGKDGASRG…PATRKEYHTG (111 aa)) are disordered. Ser-279 carries the post-translational modification Phosphoserine. Positions 311-323 (SGSGSDGNWGSGT) are enriched in gly residues. Low complexity-rich tracts occupy residues 324-344 (TGSD…SGSG) and 354-364 (GEFSEFGGSSS). Ser-326 carries the phosphoserine modification. Residues Cys-404 and Cys-434 are joined by a disulfide bond. The residue at position 470 (Ser-470) is a Phosphoserine. At Pro-499 the chain carries 4-hydroxyproline; by P4HA1. Over residues 522 to 536 (DEAASEAHQEGDTRT) the composition is skewed to basic and acidic residues. The tract at residues 522 to 542 (DEAASEAHQEGDTRTTKRGRA) is disordered. At Ser-526 the chain carries Phosphoserine. In terms of domain architecture, Fibrinogen C-terminal spans 539-780 (RGRARTMRDC…AVRMKIRPLV (242 aa)). N-linked (GlcNAc...) asparagine glycosylation is present at Asn-602. Asp-707, Asp-709, Trp-711, and Glu-713 together coordinate Ca(2+). A disulfide bridge links Cys-715 with Cys-728.

In terms of assembly, heterohexamer; disulfide linked. Contains 2 sets of 3 non-identical chains (alpha, beta and gamma). The 2 heterotrimers are in head to head conformation with the N-termini in a small central domain. In terms of processing, conversion of fibrinogen to fibrin is triggered by thrombin, which cleaves fibrinopeptides A and B from alpha and beta chains, and thus exposes the N-terminal polymerization sites responsible for the formation of the soft clot. The soft clot is converted into the hard clot by factor XIIIA which catalyzes the epsilon-(gamma-glutamyl)lysine cross-linking between gamma chains (stronger) and between alpha chains (weaker) of different monomers. Post-translationally, forms F13A-mediated cross-links between a glutamine and the epsilon-amino group of a lysine residue, forming fibronectin-fibrinogen heteropolymers. Phosphorylated by FAM20C in the extracellular medium.

The protein localises to the secreted. Functionally, cleaved by the protease thrombin to yield monomers which, together with fibrinogen beta (FGB) and fibrinogen gamma (FGG), polymerize to form an insoluble fibrin matrix. Fibrin has a major function in hemostasis as one of the primary components of blood clots. In addition, functions during the early stages of wound repair to stabilize the lesion and guide cell migration during re-epithelialization. Was originally thought to be essential for platelet aggregation, based on in vitro studies using anticoagulated blood. However, subsequent studies have shown that it is not absolutely required for thrombus formation in vivo. Enhances expression of SELP in activated platelets via an ITGB3-dependent pathway. Maternal fibrinogen is essential for successful pregnancy. Fibrin deposition is also associated with infection, where it protects against IFNG-mediated hemorrhage. May also facilitate the immune response via both innate and T-cell mediated pathways. This Rattus norvegicus (Rat) protein is Fibrinogen alpha chain (Fga).